Here is a 280-residue protein sequence, read N- to C-terminus: 3-methyl-2-oxobutanoate hydroxymethyltransferase (280 aa).

Asp49 and Asp88 together coordinate Mg(2+). Residues Asp49–Ser50, Asp88, and Lys118 each bind 3-methyl-2-oxobutanoate. Glu120 provides a ligand contact to Mg(2+). Catalysis depends on Glu187, which acts as the Proton acceptor.

Belongs to the PanB family. In terms of assembly, homodecamer; pentamer of dimers. Mg(2+) serves as cofactor.

The protein localises to the cytoplasm. It carries out the reaction 3-methyl-2-oxobutanoate + (6R)-5,10-methylene-5,6,7,8-tetrahydrofolate + H2O = 2-dehydropantoate + (6S)-5,6,7,8-tetrahydrofolate. Its pathway is cofactor biosynthesis; (R)-pantothenate biosynthesis; (R)-pantoate from 3-methyl-2-oxobutanoate: step 1/2. In terms of biological role, catalyzes the reversible reaction in which hydroxymethyl group from 5,10-methylenetetrahydrofolate is transferred onto alpha-ketoisovalerate to form ketopantoate. In Xanthobacter autotrophicus (strain ATCC BAA-1158 / Py2), this protein is 3-methyl-2-oxobutanoate hydroxymethyltransferase.